The primary structure comprises 320 residues: Malate dehydrogenase (320 aa).

NAD(+)-binding positions include 10 to 15 (GSGMIG) and D34. Residues R83 and R89 each coordinate substrate. Residues N96 and 119–121 (ITN) each bind NAD(+). Substrate contacts are provided by N121 and R152. Catalysis depends on H176, which acts as the Proton acceptor.

It belongs to the LDH/MDH superfamily. MDH type 3 family.

The enzyme catalyses (S)-malate + NAD(+) = oxaloacetate + NADH + H(+). Its function is as follows. Catalyzes the reversible oxidation of malate to oxaloacetate. The sequence is that of Malate dehydrogenase from Maricaulis maris (strain MCS10) (Caulobacter maris).